The chain runs to 505 residues: L-carnitine/gamma-butyrobetaine antiporter (505 aa).

A run of 12 helical transmembrane segments spans residues 10–30 (IEPK…WLTV), 51–71 (WGWA…WLVF), 92–112 (IFMM…SIEI), 143–163 (GPLP…FFFV), 195–215 (FYLV…TPLV), 231–251 (LDAI…ACGL), 263–283 (SYLS…SFIM), 316–336 (WTVF…IFLA), 347–367 (LCFG…TVLG), 403–423 (LSTA…VTLI), 446–466 (LLVR…LLAL), and 475–495 (AIIA…LSFI).

This sequence belongs to the BCCT transporter (TC 2.A.15) family. CaiT subfamily. Homotrimer.

The protein resides in the cell inner membrane. It catalyses the reaction 4-(trimethylamino)butanoate(in) + (R)-carnitine(out) = 4-(trimethylamino)butanoate(out) + (R)-carnitine(in). It participates in amine and polyamine metabolism; carnitine metabolism. Its function is as follows. Catalyzes the exchange of L-carnitine for gamma-butyrobetaine. In Salmonella typhi, this protein is L-carnitine/gamma-butyrobetaine antiporter.